The following is a 463-amino-acid chain: Putative protein FAM90A2P (463 aa).

4 disordered regions span residues 1–42 (MTAR…DPRL), 67–115 (ALVP…PQRK), 150–295 (MPVH…PAQA), and 326–365 (ALEN…PPHS). Basic and acidic residues-rich tracts occupy residues 74–83 (GKKEGKENLK), 97–114 (NKDK…DPQR), and 159–170 (PCVDPELADRSA). Over residues 180–198 (LASLSPLRKASLRSSSSLG) the composition is skewed to low complexity.

The protein belongs to the FAM90 family.

In Homo sapiens (Human), this protein is Putative protein FAM90A2P (FAM90A2P).